Reading from the N-terminus, the 167-residue chain is MPTRSLPTFLTLLLLASIDWVSKLVVLLKSCQLSPHSSAFLYSYVWGHFSFLIIPSFNEGAAFGLFTQYKIPLLIFRVCVILGLALFLRIKYKSLHRRTRVALTLILAGALGNVGDILLYGKVVDFLSLSYYSWRFPSFNLADAFISIGTLLLIGHLYFTKESKKYF.

The next 4 membrane-spanning stretches (helical) occupy residues 8 to 28 (TFLT…VVLL), 46 to 66 (WGHF…FGLF), 68 to 88 (QYKI…ALFL), and 101 to 121 (VALT…LLYG). Active-site residues include Asp125 and Asp143. A helical membrane pass occupies residues 139–159 (FNLADAFISIGTLLLIGHLYF).

It belongs to the peptidase A8 family.

Its subcellular location is the cell inner membrane. It catalyses the reaction Release of signal peptides from bacterial membrane prolipoproteins. Hydrolyzes -Xaa-Yaa-Zaa-|-(S,diacylglyceryl)Cys-, in which Xaa is hydrophobic (preferably Leu), and Yaa (Ala or Ser) and Zaa (Gly or Ala) have small, neutral side chains.. The protein operates within protein modification; lipoprotein biosynthesis (signal peptide cleavage). Functionally, this protein specifically catalyzes the removal of signal peptides from prolipoproteins. The sequence is that of Lipoprotein signal peptidase from Chlamydia trachomatis serovar A (strain ATCC VR-571B / DSM 19440 / HAR-13).